A 210-amino-acid chain; its full sequence is MARALVLLSVVLVSLLVNQGRASDNQRLFNNAVIRVQHLHQLAAKMINDFEDSLLPEERRQLSKIFPLSFCNSDYIEAPTGKDETQKSSMLKLLRISFRLIESWEYPSQTLSGTVSNSLTAGNPNQITEKLADLKMGINVLIKGSLDGQPNIDDNDSLPLPFEDFYLTMGENNLRESFRLLACFKKDMHKVETYLRVANCRRSLDSNCTL.

The first 22 residues, 1-22, serve as a signal peptide directing secretion; it reads MARALVLLSVVLVSLLVNQGRA. Position 38 (histidine 38) interacts with Zn(2+). A disulfide bond links cysteine 71 and cysteine 183. Position 192 (glutamate 192) interacts with Zn(2+). A disulfide bridge links cysteine 200 with cysteine 208.

The protein belongs to the somatotropin/prolactin family.

The protein localises to the secreted. In terms of biological role, growth hormone plays an important role in growth control and is involved in the regulation of several anabolic processes. Implicated as an osmoregulatory substance important for seawater adaptation. The chain is Somatotropin-2 (gh2) from Carassius auratus (Goldfish).